The sequence spans 303 residues: Sodium/potassium-transporting ATPase subunit beta-1 (303 aa).

Residues 1–34 (MPAATKDSDGGWKKFLWNSEKKEFLGRTGGSWAK) lie on the Cytoplasmic side of the membrane. Residues 35 to 55 (ILLFYVIFYGCLAGIFIGTIQ) traverse the membrane as a helical; Signal-anchor for type II membrane protein segment. Residues 56 to 303 (ALLLTINDFK…FDVKFTINES (248 aa)) are Extracellular-facing. Residue asparagine 113 is glycosylated (N-linked (GlcNAc...) asparagine). 2 disulfide bridges follow: cysteine 126–cysteine 149 and cysteine 159–cysteine 175. N-linked (GlcNAc...) asparagine glycans are attached at residues asparagine 194 and asparagine 264. A disulfide bond links cysteine 214 and cysteine 275.

The protein belongs to the X(+)/potassium ATPases subunit beta family. The sodium/potassium-transporting ATPase is composed of a catalytic alpha subunit, an auxiliary non-catalytic beta subunit and an additional regulatory subunit. Detected in all tissues except liver and cardiac muscle. Highest levels found in intestine, ovary and kidney with marginally lower levels in brain, spleen, esophagus, eye and pancreas, intermediate levels in gill and low levels in white and red skeletal muscle.

It localises to the cell membrane. This is the non-catalytic component of the active enzyme, which catalyzes the hydrolysis of ATP coupled with the exchange of Na(+) and K(+) ions across the plasma membrane. The beta subunit regulates, through assembly of alpha/beta heterodimers, the number of sodium pumps transported to the plasma membrane. The protein is Sodium/potassium-transporting ATPase subunit beta-1 (atp1b1) of Anguilla anguilla (European freshwater eel).